The sequence spans 856 residues: Rab effector MyRIP (856 aa).

Residues 4-124 enclose the RabBD domain; it reads KLDLSGLTDD…TQSLEWFYNN (121 aa). Residues 63–105 form an FYVE-type zinc finger; it reads CCMRCCSPFTFLVNARRRCGECKFSVCKSCCSYQKHEKLWVCC. The myosin-binding stretch occupies residues 143 to 560; the sequence is RKHRLESGAC…AQVSDNVSET (418 aa). Residues 193–209 form a PRKAR2A-binding region; the sequence is VALRVAEEAIEEAISKA. A negative regulation of PRKAR2A-binding region spans residues 232–248; the sequence is LTEELAGTILQRIIRKQ. Residues 252–294 are disordered; it reads AELRAEEEEPEWPRSQSGSVKARGEGTTAPPGRHKARATFRRS. Residues Ser299 and Ser351 each carry the phosphoserine modification. Disordered regions lie at residues 351–578, 592–625, 778–806, and 826–856; these read SPDG…SVEE, SEKE…NNQG, RRDQ…PPVK, and LLQG…AVMY. The segment covering 395–405 has biased composition (acidic residues); it reads IGSDSEEDFDY. Composition is skewed to low complexity over residues 427–437 and 450–460; these read PTQAQSSGQGP and SDSETSSTSSS. The actin-binding stretch occupies residues 495–856; that stretch reads FNPQAAGGET…EPDLESAVMY (362 aa). Composition is skewed to polar residues over residues 551–574, 613–625, 784–793, and 826–840; these read AQVS…SSTD, QKGS…NNQG, RSQVQTIDTS, and LLQG…ASTG.

Binds RAB27A that has been activated by GTP-binding via its N-terminus. Binds MYO5A, MYO7A and F-actin. Interacts with PRKAR2A. Interacts with components of the exocyst complex, including EXOC3 and EXOC4. Detected in brain, skin, heart, lung, adrenal medulla, pancreas, intestine, liver, kidney, skeletal muscle and testis. Detected in cochlear and vestibular hair cells in the inner ear, and in photoreceptor and pigment epithelium cells in the retina.

It is found in the cytoplasm. The protein resides in the perinuclear region. Its subcellular location is the cytoplasmic vesicle. It localises to the secretory vesicle. The protein localises to the melanosome. In terms of biological role, rab effector protein involved in melanosome transport. Serves as link between melanosome-bound RAB27A and the motor proteins MYO5A and MYO7A. May link RAB27A-containing vesicles to actin filaments. Functions as a protein kinase A-anchoring protein (AKAP). May act as a scaffolding protein that links PKA to components of the exocytosis machinery, thus facilitating exocytosis, including insulin release. In Mus musculus (Mouse), this protein is Rab effector MyRIP (Myrip).